Reading from the N-terminus, the 410-residue chain is MGKRKAFIDKKASQSFRLVPDNRERSERFKPTQEHLEEQQKYGVYYDDDYDYLQHMRAVNEPMKLENVHEEVEKTTIKTSGSSAFPPAPPLFGLVGALKKPEFFDEDVANALEEVTDDRNTGELEDNFITLAGGLLDERTTVYRSTRRGEDSEEEEDDDEDDEMYDDYNDDELFGEEAVGEIRVERADQRVIDNAFEELMDREYNTDQIGELDGDDYDVGGALEPNAGRLHKLINDKGPSNAEYDEELAKHYVRERMRLIEEGVIKDKEEYEIVEVDEGTNKKMKWDCESFATQYTNIYNHPTLIKEPRGLSRKALKRFDKAVEEMDIAEEDEDDDEDMEDDDDKESVFSTVSTFRPKNETPEQRSLRKKAVKEARKLRRVEKKANKTMFAEEKRKLAKGRIGQIKARPI.

Disordered regions lie at residues 142-165 (VYRS…DEMY) and 325-378 (EMDI…ARKL). Acidic residues-rich tracts occupy residues 151–165 (DSEE…DEMY) and 325–345 (EMDI…DDDK). Residues 357-366 (PKNETPEQRS) show a composition bias toward basic and acidic residues. Positions 363-389 (EQRSLRKKAVKEARKLRRVEKKANKTM) form a coiled coil. Residues 367–378 (LRKKAVKEARKL) show a composition bias toward basic residues.

It belongs to the LTV1 family.

The sequence is that of Protein LTV1 homolog from Caenorhabditis elegans.